The sequence spans 496 residues: Glycerol kinase (496 aa).

An ADP-binding site is contributed by Thr-14. Positions 14 and 15 each coordinate ATP. Sn-glycerol 3-phosphate is bound at residue Thr-14. Sn-glycerol 3-phosphate contacts are provided by Arg-84, Glu-85, Tyr-136, and Asp-246. Residues Arg-84, Glu-85, Tyr-136, Asp-246, and Gln-247 each contribute to the glycerol site. 2 residues coordinate ADP: Thr-268 and Gly-313. ATP-binding residues include Thr-268, Gly-313, Gln-317, and Gly-414. The ADP site is built by Gly-414 and Asn-418.

The protein belongs to the FGGY kinase family.

The enzyme catalyses glycerol + ATP = sn-glycerol 3-phosphate + ADP + H(+). It participates in polyol metabolism; glycerol degradation via glycerol kinase pathway; sn-glycerol 3-phosphate from glycerol: step 1/1. With respect to regulation, inhibited by fructose 1,6-bisphosphate (FBP). Key enzyme in the regulation of glycerol uptake and metabolism. Catalyzes the phosphorylation of glycerol to yield sn-glycerol 3-phosphate. In Myxococcus xanthus (strain DK1622), this protein is Glycerol kinase.